The primary structure comprises 352 residues: UPF0324 membrane protein BCE_5279 (352 aa).

Helical transmembrane passes span 25–47 (FGFSQGIGITLLIAIVAKYLAEL), 52–71 (IMGQLVIAILIGMVWRAAIG), 111–130 (VLVIAAVVITFTIFVVYGLT), 140–162 (GILTACGTAICGAAAVVAIAPQV), 169–191 (TAVGAAIIAILGTIFTLIYTLLY), 201–223 (YGVFSGATLHEIAHVIAAAAPGG), 230–252 (AVIVKLTRVAMLVPVAILIGLWF), 267–289 (LPIPWFIFGFLAMSAVHSLGIIP), 291–313 (VVAGYIVVIAYMLIAMAMAGLGL), and 328–350 (FVAGLIGSVCLSVLGYVLVYALG).

Belongs to the UPF0324 family.

It localises to the cell membrane. This Bacillus cereus (strain ATCC 10987 / NRS 248) protein is UPF0324 membrane protein BCE_5279.